A 312-amino-acid polypeptide reads, in one-letter code: uncharacterized protein (312 aa).

2 disordered regions span residues 1 to 26 (MQKDIGRRFQRNKKKINSKPGGAMVA) and 45 to 106 (GNLQ…LPSG). Basic residues predominate over residues 8–17 (RFQRNKKKIN). Basic and acidic residues predominate over residues 68 to 77 (NGKRNGDKVR). The segment covering 85–103 (GHSSYAGSRISGGNSNSHL) has biased composition (polar residues).

This is an uncharacterized protein from Schizosaccharomyces pombe (strain 972 / ATCC 24843) (Fission yeast).